A 250-amino-acid chain; its full sequence is Small ribosomal subunit protein uS3 (250 aa).

Positions Val39–Asp107 constitute a KH type-2 domain. The segment at Val214–Glu250 is disordered. A compositionally biased stretch (basic and acidic residues) spans Gln220–Glu250.

This sequence belongs to the universal ribosomal protein uS3 family. As to quaternary structure, part of the 30S ribosomal subunit. Forms a tight complex with proteins S10 and S14.

Binds the lower part of the 30S subunit head. Binds mRNA in the 70S ribosome, positioning it for translation. The protein is Small ribosomal subunit protein uS3 of Acinetobacter baylyi (strain ATCC 33305 / BD413 / ADP1).